A 938-amino-acid chain; its full sequence is Isoleucine--tRNA ligase (938 aa).

Residues Pro58 to His68 carry the 'HIGH' region motif. Lys183 bears the N6-acetyllysine mark. L-isoleucyl-5'-AMP is bound at residue Glu561. The 'KMSKS' region signature appears at Lys602–Ser606. Residue Lys605 participates in ATP binding. Residues Cys901, Cys904, Cys921, and Cys924 each contribute to the Zn(2+) site.

The protein belongs to the class-I aminoacyl-tRNA synthetase family. IleS type 1 subfamily. As to quaternary structure, monomer. Zn(2+) serves as cofactor.

It is found in the cytoplasm. The catalysed reaction is tRNA(Ile) + L-isoleucine + ATP = L-isoleucyl-tRNA(Ile) + AMP + diphosphate. Functionally, catalyzes the attachment of isoleucine to tRNA(Ile). As IleRS can inadvertently accommodate and process structurally similar amino acids such as valine, to avoid such errors it has two additional distinct tRNA(Ile)-dependent editing activities. One activity is designated as 'pretransfer' editing and involves the hydrolysis of activated Val-AMP. The other activity is designated 'posttransfer' editing and involves deacylation of mischarged Val-tRNA(Ile). In Escherichia coli O17:K52:H18 (strain UMN026 / ExPEC), this protein is Isoleucine--tRNA ligase.